The chain runs to 330 residues: Inactive hydroxysteroid dehydrogenase-like protein 1 (330 aa).

N-acetylalanine is present on Ala-2. The required for mitochondria translocation stretch occupies residues 2–82; it reads AAVDSFYLLY…SGATDGIGRA (81 aa). NADP(+) is bound by residues 74–80, Asp-125, and Lys-222; that span reads GATDGIG.

It belongs to the short-chain dehydrogenases/reductases (SDR) family. 17-beta-HSD 3 subfamily. Interacts with STYXL1.

It is found in the mitochondrion. This is Inactive hydroxysteroid dehydrogenase-like protein 1 (HSDL1) from Pongo abelii (Sumatran orangutan).